The primary structure comprises 795 residues: Phenylalanine--tRNA ligase beta subunit (795 aa).

Residues 39 to 148 enclose the tRNA-binding domain; the sequence is AGTFNGVVVG…LDAPIGTDLR (110 aa). Positions 401–476 constitute a B5 domain; that stretch reads PKVNTVQLRR…RIYGYNSIPN (76 aa). Residues Asp-454, Asp-460, Glu-463, and Glu-464 each coordinate Mg(2+). The 94-residue stretch at 701 to 794 folds into the FDX-ACB domain; sequence SKFPANRRDL…VKQRFNAELR (94 aa).

This sequence belongs to the phenylalanyl-tRNA synthetase beta subunit family. Type 1 subfamily. In terms of assembly, tetramer of two alpha and two beta subunits. It depends on Mg(2+) as a cofactor.

Its subcellular location is the cytoplasm. The enzyme catalyses tRNA(Phe) + L-phenylalanine + ATP = L-phenylalanyl-tRNA(Phe) + AMP + diphosphate + H(+). The polypeptide is Phenylalanine--tRNA ligase beta subunit (pheT) (Haemophilus influenzae (strain ATCC 51907 / DSM 11121 / KW20 / Rd)).